We begin with the raw amino-acid sequence, 365 residues long: Succinyl-diaminopimelate desuccinylase (365 aa).

A Zn(2+)-binding site is contributed by histidine 65. Residue aspartate 67 is part of the active site. Aspartate 96 contributes to the Zn(2+) binding site. Glutamate 126 functions as the Proton acceptor in the catalytic mechanism. Zn(2+)-binding residues include glutamate 127, glutamate 155, and histidine 340.

It belongs to the peptidase M20A family. DapE subfamily. In terms of assembly, homodimer. It depends on Zn(2+) as a cofactor. Co(2+) serves as cofactor.

It carries out the reaction N-succinyl-(2S,6S)-2,6-diaminopimelate + H2O = (2S,6S)-2,6-diaminopimelate + succinate. Its pathway is amino-acid biosynthesis; L-lysine biosynthesis via DAP pathway; LL-2,6-diaminopimelate from (S)-tetrahydrodipicolinate (succinylase route): step 3/3. Its function is as follows. Catalyzes the hydrolysis of N-succinyl-L,L-diaminopimelic acid (SDAP), forming succinate and LL-2,6-diaminopimelate (DAP), an intermediate involved in the bacterial biosynthesis of lysine and meso-diaminopimelic acid, an essential component of bacterial cell walls. The sequence is that of Succinyl-diaminopimelate desuccinylase from Campylobacter jejuni subsp. jejuni serotype O:23/36 (strain 81-176).